The sequence spans 191 residues: MLLPRQFYARDVLIVAKDLLNCYLVREYNGHLLIGKIVETEAYHQNDPACHAYRGKTKRNEVMFGPPGHAYVYFTYGMHYCFNVVTGAIGRAEAVLIRALEPVKGIDIIKTLRGGKSERELLSGPAKLTQGLAIDLKLNGHDLTGGKILYITKGEPVAEEDIVVTTRIGINAGKDLPYRFYLKNNKYVSKK.

The protein belongs to the DNA glycosylase MPG family.

The sequence is that of Putative 3-methyladenine DNA glycosylase from Carboxydothermus hydrogenoformans (strain ATCC BAA-161 / DSM 6008 / Z-2901).